Consider the following 337-residue polypeptide: Large ribosomal subunit protein uL3 (337 aa).

A disordered region spans residues methionine 1–lysine 26.

The protein belongs to the universal ribosomal protein uL3 family. Part of the 50S ribosomal subunit. Forms a cluster with proteins L14 and L24e.

In terms of biological role, one of the primary rRNA binding proteins, it binds directly near the 3'-end of the 23S rRNA, where it nucleates assembly of the 50S subunit. This is Large ribosomal subunit protein uL3 from Methanocella arvoryzae (strain DSM 22066 / NBRC 105507 / MRE50).